Consider the following 279-residue polypeptide: Probable autolysin LDP (279 aa).

The signal sequence occupies residues 1–24 (MKKSLTVTVSSVLAFLALNNAAHA). A LysM domain is found at 51-94 (TTYTVVAGDSLYKIALEHHLTLNQLYSYNPGVTPLIFPGDVISL). The Peptidase C51 domain maps to 158–279 (VPTVPVAHNY…LNPGKYNYIH (122 aa)).

The catalysed reaction is Hydrolyzes the link between N-acetylmuramoyl residues and L-amino acid residues in certain cell-wall glycopeptides.. Its function is as follows. Has weak lytic activity toward S.aureus cells. This Staphylococcus aureus (strain NCTC 8325 / PS 47) protein is Probable autolysin LDP.